A 331-amino-acid chain; its full sequence is 6-phosphogluconolactonase (331 aa).

K287 bears the N6-acetyllysine mark.

The protein belongs to the cycloisomerase 2 family.

The enzyme catalyses 6-phospho-D-glucono-1,5-lactone + H2O = 6-phospho-D-gluconate + H(+). It functions in the pathway carbohydrate degradation; pentose phosphate pathway; D-ribulose 5-phosphate from D-glucose 6-phosphate (oxidative stage): step 2/3. Functionally, catalyzes the hydrolysis of 6-phosphogluconolactone to 6-phosphogluconate. This is 6-phosphogluconolactonase from Shigella boydii serotype 18 (strain CDC 3083-94 / BS512).